A 523-amino-acid chain; its full sequence is 26S proteasome regulatory subunit RPN3 (523 aa).

N-acetylalanine is present on Ala-2. The PCI domain occupies 270-450 (ARYFFYLSKI…GFIETTELLN (181 aa)). Residue Ser-454 is modified to Phosphoserine. Residues 480–495 (RYPEDKKTQQNEKSEN) show a composition bias toward basic and acidic residues. Residues 480-523 (RYPEDKKTQQNEKSENGENDDDTLDGDLMDDMSDISDLDDLGFL) form a disordered region. A compositionally biased stretch (acidic residues) spans 496–523 (GENDDDTLDGDLMDDMSDISDLDDLGFL).

It belongs to the proteasome subunit S3 family. As to quaternary structure, the 26S proteasome is composed of a core protease, known as the 20S proteasome, capped at one or both ends by the 19S regulatory complex (RC). The RC is composed of at least 18 different subunits in two subcomplexes, the base and the lid, which form the portions proximal and distal to the 20S proteolytic core, respectively. N-acetylated by NAT1.

In terms of biological role, acts as a regulatory subunit of the 26S proteasome which is involved in the ATP-dependent degradation of ubiquitinated proteins. This chain is 26S proteasome regulatory subunit RPN3 (RPN3), found in Saccharomyces cerevisiae (strain ATCC 204508 / S288c) (Baker's yeast).